A 253-amino-acid chain; its full sequence is Probable transcriptional regulatory protein A1G_04400 (253 aa).

The segment at Met1–Arg21 is disordered.

This sequence belongs to the TACO1 family.

It localises to the cytoplasm. This is Probable transcriptional regulatory protein A1G_04400 from Rickettsia rickettsii (strain Sheila Smith).